Here is a 2087-residue protein sequence, read N- to C-terminus: Rho GTPase-activating protein 32 (2087 aa).

The PX; atypical domain maps to 131-245; that stretch reads GSIQLSLSEE…LTWMEIDNKG (115 aa). The region spanning 259-321 is the SH3 domain; it reads PAVGAAHVIK…PGHCVELINQ (63 aa). The Rho-GAP domain maps to 372–567; that stretch reads CDLGEHLLNS…FILNHVDVLF (196 aa). Phosphoserine occurs at positions 706, 709, 732, and 738. Residues 818–858 are disordered; sequence FLDSPGYSKDKPSANKKDAETGSSQCQTPGSTASSEPVSPL. Basic and acidic residues predominate over residues 825–837; it reads SKDKPSANKKDAE. Over residues 838-854 the composition is skewed to polar residues; sequence TGSSQCQTPGSTASSEP. Phosphoserine is present on residues serine 852, serine 856, and serine 892. The segment covering 927 to 938 has biased composition (low complexity); it reads SNTTAQNASSST. Disordered stretches follow at residues 927-1038, 1103-1143, and 1169-1257; these read SNTT…PPKN, PAEQ…EQHH, and VPLD…ENTS. Residue serine 952 is modified to Phosphoserine. Composition is skewed to low complexity over residues 994–1005 and 1019–1029; these read SVSSSQSKAVAS and QDSVPVSSVSL. Over residues 1124-1138 the composition is skewed to polar residues; it reads TTATGDPTHSNTTES. The segment covering 1172-1182 has biased composition (basic and acidic residues); sequence DSEKSDDHVSF. Polar residues predominate over residues 1188 to 1203; sequence GKNSMPTVSFLDQDQS. Serine 1203 is modified (phosphoserine). Over residues 1222–1232 the composition is skewed to basic and acidic residues; the sequence is DKLHHPLEFAD. Residues 1391–1711 form an interaction with GAB2 region; that stretch reads RVPLLHLRAE…YSYAGLAPRP (321 aa). Asymmetric dimethylarginine occurs at positions 1523 and 1533. Serine 1585 carries the post-translational modification Phosphoserine. The interval 1685-2087 is interaction with FYN; the sequence is PNRDFAFYNP…QHPETQIHAE (403 aa). Residues 1798 to 1896 form a disordered region; the sequence is PGKTGLLSVA…QFCESKNGPP (99 aa). Basic and acidic residues predominate over residues 1823–1838; it reads GEDRFYRRHPEAEMDR. Positions 1847 to 1862 are enriched in polar residues; sequence STQPEKPSLPQKQSSL. Over residues 1875–1889 the composition is skewed to basic and acidic residues; the sequence is PEHRAHQEASHRQFC. The residue at position 2037 (arginine 2037) is an Omega-N-methylarginine.

The protein belongs to the PX domain-containing GAP family. In terms of assembly, interacts with NTRK1 (via cytoplasmic domain); the interaction is independent of the phosphorylation state of NTRK1. Interacts with SHC3 (via SH2 domain). Interacts with RASA1 (via SH3 domain); the interaction is necessary for the Ras activation and cell transforming activities of ARHGAP32. Interacts with GAB1 and GAB2. Interacts with CRK and CRKL. Found in a complex with CRKL and BCAR1; upon EGF stimulation BCAR1 may be replaced by EGFR. Interacts with NCK1 (via SH3 domain); NCK1 recruits phosphorylated BCAR1 to the complex. Isoform 2 interacts with FYN; the interaction appears to be dependent on tyrosine phosphorylation of ARHGAP32. Interacts with EGFR; the interaction requires EGF stimulation and is increased by SHC3. Interacts with CDC42; the interaction requires constitutively active CDC42. Interacts with CTNNB1. Interacts with GRIN2B. Interacts with DLG4 and CDH2. Interacts with GPHN. Post-translationally, isoform 2 is phosphorylated on multiple tyrosine residues by FYN. Phosphorylated tyrosine residues undergo dephosphorylation after stimulation of NMDA receptors. Phosphorylated in vitro by CaMK2 in the presence of calmodulin and calcium; which inhibits GAP activity. In terms of tissue distribution, isoform 1 and isoform 2 are highly expressed in brain and testis. Isoform 1 is also expressed in other tissues such as lung, liver and spleen.

It is found in the postsynaptic density. The protein localises to the cell projection. It localises to the dendritic spine. The protein resides in the cytoplasm. Its subcellular location is the cell cortex. It is found in the endosome membrane. The protein localises to the golgi apparatus membrane. It localises to the endoplasmic reticulum membrane. The protein resides in the membrane. In terms of biological role, GTPase-activating protein (GAP) promoting GTP hydrolysis on RHOA, CDC42 and RAC1 small GTPases. May be involved in the differentiation of neuronal cells during the formation of neurite extensions. Involved in NMDA receptor activity-dependent actin reorganization in dendritic spines. May mediate cross-talks between Ras- and Rho-regulated signaling pathways in cell growth regulation. Isoform 2 has higher GAP activity. The chain is Rho GTPase-activating protein 32 (ARHGAP32) from Homo sapiens (Human).